Here is a 261-residue protein sequence, read N- to C-terminus: Rhomboid-type serine protease 2 (261 aa).

Transmembrane regions (helical) follow at residues 17–37 (LTAG…VFPI), 58–78 (LYPL…SLFV), 94–114 (ITLN…GMLL), 116–136 (PNVY…YFAV), and 155–175 (LYIP…SSFV). The active-site Nucleophile is the serine 124. Residue histidine 177 is part of the active site.

It belongs to the peptidase S54 family.

It localises to the golgi apparatus membrane. It is found in the golgi apparatus. Its subcellular location is the cis-Golgi network membrane. The catalysed reaction is Cleaves type-1 transmembrane domains using a catalytic dyad composed of serine and histidine that are contributed by different transmembrane domains.. Its function is as follows. Probable rhomboid-type serine protease that catalyzes intramembrane proteolysis. This is Rhomboid-type serine protease 2 (RBD2) from Eremothecium gossypii (strain ATCC 10895 / CBS 109.51 / FGSC 9923 / NRRL Y-1056) (Yeast).